The primary structure comprises 61 residues: Large ribosomal subunit protein uL30 (61 aa).

It belongs to the universal ribosomal protein uL30 family. In terms of assembly, part of the 50S ribosomal subunit.

This Chlorobaculum parvum (strain DSM 263 / NCIMB 8327) (Chlorobium vibrioforme subsp. thiosulfatophilum) protein is Large ribosomal subunit protein uL30.